A 133-amino-acid polypeptide reads, in one-letter code: Large-conductance mechanosensitive channel (133 aa).

2 helical membrane passes run 10-30 (FAVKGNVMDMAVGVIIGGAFG) and 76-96 (GAFIQNIFDFLIIAIAVFSMV).

The protein belongs to the MscL family. As to quaternary structure, homopentamer.

It localises to the cell inner membrane. Channel that opens in response to stretch forces in the membrane lipid bilayer. May participate in the regulation of osmotic pressure changes within the cell. In Haemophilus ducreyi (strain 35000HP / ATCC 700724), this protein is Large-conductance mechanosensitive channel.